Consider the following 143-residue polypeptide: ATP synthase subunit b' (143 aa).

Residues 6-26 form a helical membrane-spanning segment; sequence ATLPFMALQFLLLAAVLNAIF.

The protein belongs to the ATPase B chain family. In terms of assembly, F-type ATPases have 2 components, F(1) - the catalytic core - and F(0) - the membrane proton channel. F(1) has five subunits: alpha(3), beta(3), gamma(1), delta(1), epsilon(1). F(0) has four main subunits: a(1), b(1), b'(1) and c(10-14). The alpha and beta chains form an alternating ring which encloses part of the gamma chain. F(1) is attached to F(0) by a central stalk formed by the gamma and epsilon chains, while a peripheral stalk is formed by the delta, b and b' chains.

The protein resides in the cellular thylakoid membrane. Its function is as follows. F(1)F(0) ATP synthase produces ATP from ADP in the presence of a proton or sodium gradient. F-type ATPases consist of two structural domains, F(1) containing the extramembraneous catalytic core and F(0) containing the membrane proton channel, linked together by a central stalk and a peripheral stalk. During catalysis, ATP synthesis in the catalytic domain of F(1) is coupled via a rotary mechanism of the central stalk subunits to proton translocation. Component of the F(0) channel, it forms part of the peripheral stalk, linking F(1) to F(0). The b'-subunit is a diverged and duplicated form of b found in plants and photosynthetic bacteria. The chain is ATP synthase subunit b' from Nostoc punctiforme (strain ATCC 29133 / PCC 73102).